The sequence spans 377 residues: 4-hydroxy-3-methylbut-2-en-1-yl diphosphate synthase (flavodoxin) (377 aa).

[4Fe-4S] cluster is bound by residues cysteine 275, cysteine 278, cysteine 310, and glutamate 317.

The protein belongs to the IspG family. The cofactor is [4Fe-4S] cluster.

It carries out the reaction (2E)-4-hydroxy-3-methylbut-2-enyl diphosphate + oxidized [flavodoxin] + H2O + 2 H(+) = 2-C-methyl-D-erythritol 2,4-cyclic diphosphate + reduced [flavodoxin]. It functions in the pathway isoprenoid biosynthesis; isopentenyl diphosphate biosynthesis via DXP pathway; isopentenyl diphosphate from 1-deoxy-D-xylulose 5-phosphate: step 5/6. Its function is as follows. Converts 2C-methyl-D-erythritol 2,4-cyclodiphosphate (ME-2,4cPP) into 1-hydroxy-2-methyl-2-(E)-butenyl 4-diphosphate. This Jannaschia sp. (strain CCS1) protein is 4-hydroxy-3-methylbut-2-en-1-yl diphosphate synthase (flavodoxin).